The chain runs to 1018 residues: Isoleucine--tRNA ligase (1018 aa).

The 'HIGH' region signature appears at 43-53 (PYTTGRIHLGT). A 'KMSKS' region motif is present at residues 586–590 (KMSKS). K589 serves as a coordination point for ATP.

Belongs to the class-I aminoacyl-tRNA synthetase family. IleS type 2 subfamily. As to quaternary structure, monomer. Requires Zn(2+) as cofactor.

The protein resides in the cytoplasm. The enzyme catalyses tRNA(Ile) + L-isoleucine + ATP = L-isoleucyl-tRNA(Ile) + AMP + diphosphate. Its function is as follows. Catalyzes the attachment of isoleucine to tRNA(Ile). As IleRS can inadvertently accommodate and process structurally similar amino acids such as valine, to avoid such errors it has two additional distinct tRNA(Ile)-dependent editing activities. One activity is designated as 'pretransfer' editing and involves the hydrolysis of activated Val-AMP. The other activity is designated 'posttransfer' editing and involves deacylation of mischarged Val-tRNA(Ile). The sequence is that of Isoleucine--tRNA ligase from Archaeoglobus fulgidus (strain ATCC 49558 / DSM 4304 / JCM 9628 / NBRC 100126 / VC-16).